A 142-amino-acid chain; its full sequence is Alpha-lactalbumin (142 aa).

The first 19 residues, 1–19, serve as a signal peptide directing secretion; sequence MMSFVSLLLVGILFHATQA. The region spanning 20–142 is the C-type lysozyme domain; that stretch reads EQLTKCEVFR…KLDQWLCEKL (123 aa). 4 disulfides stabilise this stretch: cysteine 25/cysteine 139, cysteine 47/cysteine 130, cysteine 80/cysteine 96, and cysteine 92/cysteine 110. Residues asparagine 64 and asparagine 93 are each glycosylated (N-linked (GlcNAc...) asparagine). Ca(2+) is bound by residues lysine 98, aspartate 101, aspartate 103, aspartate 106, and aspartate 107.

Belongs to the glycosyl hydrolase 22 family. Lactose synthase (LS) is a heterodimer of a catalytic component, beta1,4-galactosyltransferase (beta4Gal-T1) and a regulatory component, alpha-lactalbumin (LA). Mammary gland specific. Secreted in milk.

It is found in the secreted. In terms of biological role, regulatory subunit of lactose synthase, changes the substrate specificity of galactosyltransferase in the mammary gland making glucose a good acceptor substrate for this enzyme. This enables LS to synthesize lactose, the major carbohydrate component of milk. In other tissues, galactosyltransferase transfers galactose onto the N-acetylglucosamine of the oligosaccharide chains in glycoproteins. The protein is Alpha-lactalbumin (LALBA) of Bos mutus grunniens (Wild yak).